We begin with the raw amino-acid sequence, 161 residues long: UPF0225 protein GSU1048 (161 aa).

It belongs to the UPF0225 family.

This chain is UPF0225 protein GSU1048, found in Geobacter sulfurreducens (strain ATCC 51573 / DSM 12127 / PCA).